Consider the following 331-residue polypeptide: Aromatic 2-oxoacid reductase (331 aa).

NAD(+) is bound by residues 154-155, D175, 205-206, N211, 232-234, and D258; these read RI, AP, and AAR. R234 is a catalytic residue. E263 is a catalytic residue. H295 serves as the catalytic Proton donor.

The protein belongs to the D-isomer specific 2-hydroxyacid dehydrogenase family.

The catalysed reaction is (R)-3-phenyllactate + NAD(+) = 3-phenylpyruvate + NADH + H(+). It carries out the reaction (2R)-2-hydroxy-3-(4-hydroxyphenyl)propanoate + NAD(+) = 3-(4-hydroxyphenyl)pyruvate + NADH + H(+). It catalyses the reaction 3-(indol-3-yl)lactate + NAD(+) = indole-3-pyruvate + NADH + H(+). It participates in amino-acid degradation. Functionally, essential for the reductive metabolism of L-phenylalanine, L-tyrosine and L-tryptophan. Catalyzes the conversion of phenylpyruvic acid to phenyllactic acid, 4-hydroxy-phenylpyruvic acid to 4-hydroxy-phenyllactic acid, and indolepyruvic acid to indolelactic acid. This Clostridium sporogenes (strain ATCC 15579) protein is Aromatic 2-oxoacid reductase.